A 1047-amino-acid chain; its full sequence is Probable alpha-mannosidase At5g66150 (1047 aa).

The N-terminal stretch at 1 to 27 is a signal peptide; sequence MEKPGMSLLKGSLCVIVFLLLLSLVES. H56, D58, and D178 together coordinate Zn(2+). Residues N280, N287, and N345 are each glycosylated (N-linked (GlcNAc...) asparagine). H419 contributes to the Zn(2+) binding site. 2 cysteine pairs are disulfide-bonded: C455–C465 and C476–C484. 8 N-linked (GlcNAc...) asparagine glycosylation sites follow: N480, N508, N541, N605, N606, N668, N780, and N857. The cysteines at positions 855 and 860 are disulfide-linked.

This sequence belongs to the glycosyl hydrolase 38 family. In terms of assembly, homodimer. The cofactor is Zn(2+).

Its subcellular location is the vacuole. The enzyme catalyses Hydrolysis of terminal, non-reducing alpha-D-mannose residues in alpha-D-mannosides.. Functionally, liberates mannose from p-nitrophenyl-alpha-D-mannoside in vitro. The protein is Probable alpha-mannosidase At5g66150 of Arabidopsis thaliana (Mouse-ear cress).